A 478-amino-acid chain; its full sequence is uncharacterized protein (478 aa).

Residues 1–19 (MKLFPLCLSALVMSTATCA) form the signal peptide. At 20–214 (SSVEGAIEKV…VPVTLKLQRQ (195 aa)) the chain is on the lumenal side. The chain crosses the membrane as a helical span at residues 215 to 235 (IFLSFSIVYGLISLWWAIRCI). The Cytoplasmic portion of the chain corresponds to 236–240 (CSRTK). A helical transmembrane segment spans residues 241–261 (LHLVQVCLFCWFSFFILNHPV). The Lumenal portion of the chain corresponds to 262–289 (KQRIFSIDNPDEYLVPFVVSCFTYFLGD). A helical membrane pass occupies residues 290-310 (GIEYALYSLFITTTVLGFGTI). Over 311–317 (RRTSKKM) the chain is Cytoplasmic. The helical transmembrane segment at 318-338 (VLFFSLLTCGQAFLVNVAPMV) threads the bilayer. The Lumenal portion of the chain corresponds to 339 to 356 (YPLLYISGSDKACVLRMV). The chain crosses the membrane as a helical span at residues 357 to 377 (WVFNKFLYLPLITFLGAVLAF). Residues 378–391 (RFRLKKASQFDTRW) lie on the Cytoplasmic side of the membrane. A helical membrane pass occupies residues 392–412 (NLFALTLAIIILFAFNDLVIF). Over 413–427 (DKLQKLWKYDDTTLE) the chain is Lumenal. A helical membrane pass occupies residues 428–448 (YLKIVNGGIKFVAFSILLGPY). At 449 to 478 (SKLFAEPKSLQLDDFLGKHDGHKDPSLEKF) the chain is on the cytoplasmic side.

The protein localises to the endoplasmic reticulum membrane. It is found in the golgi apparatus membrane. This is an uncharacterized protein from Schizosaccharomyces pombe (strain 972 / ATCC 24843) (Fission yeast).